The following is a 132-amino-acid chain: Transcription antitermination protein NusB (132 aa).

This sequence belongs to the NusB family.

Functionally, involved in transcription antitermination. Required for transcription of ribosomal RNA (rRNA) genes. Binds specifically to the boxA antiterminator sequence of the ribosomal RNA (rrn) operons. This chain is Transcription antitermination protein NusB, found in Lachnoclostridium phytofermentans (strain ATCC 700394 / DSM 18823 / ISDg) (Clostridium phytofermentans).